The following is a 174-amino-acid chain: Crossover junction endodeoxyribonuclease RuvC (174 aa).

Active-site residues include Asp-8, Glu-67, and Asp-139. Residues Asp-8, Glu-67, and Asp-139 each contribute to the Mg(2+) site.

It belongs to the RuvC family. As to quaternary structure, homodimer which binds Holliday junction (HJ) DNA. The HJ becomes 2-fold symmetrical on binding to RuvC with unstacked arms; it has a different conformation from HJ DNA in complex with RuvA. In the full resolvosome a probable DNA-RuvA(4)-RuvB(12)-RuvC(2) complex forms which resolves the HJ. Mg(2+) is required as a cofactor.

The protein localises to the cytoplasm. The catalysed reaction is Endonucleolytic cleavage at a junction such as a reciprocal single-stranded crossover between two homologous DNA duplexes (Holliday junction).. Its function is as follows. The RuvA-RuvB-RuvC complex processes Holliday junction (HJ) DNA during genetic recombination and DNA repair. Endonuclease that resolves HJ intermediates. Cleaves cruciform DNA by making single-stranded nicks across the HJ at symmetrical positions within the homologous arms, yielding a 5'-phosphate and a 3'-hydroxyl group; requires a central core of homology in the junction. The consensus cleavage sequence is 5'-(A/T)TT(C/G)-3'. Cleavage occurs on the 3'-side of the TT dinucleotide at the point of strand exchange. HJ branch migration catalyzed by RuvA-RuvB allows RuvC to scan DNA until it finds its consensus sequence, where it cleaves and resolves the cruciform DNA. This chain is Crossover junction endodeoxyribonuclease RuvC, found in Pseudomonas aeruginosa (strain LESB58).